The chain runs to 500 residues: Lysine--tRNA ligase (500 aa).

2 residues coordinate Mg(2+): glutamate 407 and glutamate 414.

It belongs to the class-II aminoacyl-tRNA synthetase family. In terms of assembly, homodimer. The cofactor is Mg(2+).

The protein resides in the cytoplasm. It carries out the reaction tRNA(Lys) + L-lysine + ATP = L-lysyl-tRNA(Lys) + AMP + diphosphate. The chain is Lysine--tRNA ligase from Azobacteroides pseudotrichonymphae genomovar. CFP2.